Here is a 124-residue protein sequence, read N- to C-terminus: Small ribosomal subunit protein bS6 (124 aa).

The disordered stretch occupies residues 101–124; the sequence is IMMKEVQREEARKSAQSDAPAVAA. A compositionally biased stretch (basic and acidic residues) spans 105 to 115; it reads EVQREEARKSA.

It belongs to the bacterial ribosomal protein bS6 family.

Binds together with bS18 to 16S ribosomal RNA. This chain is Small ribosomal subunit protein bS6, found in Polynucleobacter asymbioticus (strain DSM 18221 / CIP 109841 / QLW-P1DMWA-1) (Polynucleobacter necessarius subsp. asymbioticus).